The primary structure comprises 211 residues: Suppressor of cytokine signaling 1 (211 aa).

The interval 1-53 is disordered; the sequence is MVAHNQVAADNAVSTAAEPRRRPEPSSSSSSSPAAPARPRPCPAVPAPAPGDT. Positions 25 to 35 are enriched in low complexity; that stretch reads PSSSSSSSPAA. Over residues 36–49 the composition is skewed to pro residues; that stretch reads PARPRPCPAVPAPA. The segment at 55–66 is kinase inhibitory region (KIR); it reads FRTFRSHADYRR. The tract at residues 67–78 is extended SH2 subdomain (ESS); it reads ITRASALLDACG. An SH2 domain is found at 79–174; that stretch reads FYWGPLSVHG…PLRQRRVRPL (96 aa). The 50-residue stretch at 161–210 folds into the SOCS box domain; sequence MLGAPLRQRRVRPLQELCRQRIVATVGRENLARIPLNPVLRDYLSSFPFQ. The interaction with Elongin BC complex stretch occupies residues 173–182; the sequence is PLQELCRQRI.

It belongs to the SOCS1 family. Interacts with multiple activated signaling proteins of the tyrosine kinase signaling pathway including JAK family kinases, TEC, KIT, GRB2 and VAV. Binding to JAKs is mediated through the KIR and SH2 domains to a phosphorylated tyrosine residue within the JAK JH1 domain. Binds the SH3 domain of GRB2 via diproline determinants in the N-terminus, and the N-terminal regulatory domain of VAV. Interacts with the Elongin BC complex (ELOB and ELOC). Component of an ECS CBC(SOCS1) E3 ubiquitin-protein ligase complex which contains Elongin BC, CUL5, RBX1 and SOCS1. Interacts (via SH2 domain and SOCS box) with TRIM8. Interacts with AXL, CUL2 and FGFR3. Interacts with INSR. Interacts with TRIM8. Interacts with DCUN1D1. Interacts with IFNGR1. In terms of tissue distribution, expressed in all tissues with high expression in spleen, small intestine and peripheral blood leukocytes.

The protein localises to the nucleus. It is found in the cytoplasmic vesicle. Its pathway is protein modification; protein ubiquitination. Essential negative regulator of type I and type II interferon (IFN) signaling, as well as that of other cytokines, including IL2, IL4, IL6 and leukemia inhibitory factor (LIF). Downregulates cytokine signaling by inhibiting the JAK/STAT signaling pathway. Acts by binding to JAK proteins and to IFNGR1 and inhibiting their kinase activity. In vitro, suppresses Tec protein-tyrosine activity. Regulates IFN-gamma (IFNG)-mediated sensory neuron survival. Probable substrate recognition component of an ECS (Elongin BC-CUL2/5-SOCS-box protein) E3 ubiquitin ligase complex which mediates the ubiquitination and subsequent proteasomal degradation of target proteins. The protein is Suppressor of cytokine signaling 1 (SOCS1) of Homo sapiens (Human).